The sequence spans 2092 residues: Nonribosomal peptide synthetase echPS (2092 aa).

The adenylation 1 stretch occupies residues 13–406; that stretch reads FSQRCCQNPD…GRRDRVTKIR (394 aa). A Carrier 1 domain is found at 524 to 600; that stretch reads SGPLTIGQAI…SLIEKSRHET (77 aa). An O-(pantetheine 4'-phosphoryl)serine modification is found at S561. A disordered region spans residues 596–626; sequence SRHETEDTPDSSAFATRTPEESSMPTQGPVT. Polar residues predominate over residues 605-624; it reads DSSAFATRTPEESSMPTQGP. A condensation 1 region spans residues 624–1017; sequence PVTPLQKRMV…YTSLLDAFLD (394 aa). Positions 1068–1446 are adenylation 2; it reads ASLYPTHVAV…GRKDRQVKVR (379 aa). The Carrier 2 domain maps to 1544–1622; it reads IKTTHLEKLI…DLVILVAQQQ (79 aa). S1582 is subject to O-(pantetheine 4'-phosphoryl)serine. Positions 1663–2047 are condensation 2; the sequence is SQSQSTFNVS…EALLLECFRI (385 aa).

The protein belongs to the NRP synthetase family. Requires pantetheine 4'-phosphate as cofactor.

It catalyses the reaction L-tryptophan + L-alanine + 2 ATP = cyclo(L-tryptophyl-L-alanyl) + 2 ADP + 2 phosphate + 2 H(+). The protein operates within secondary metabolite biosynthesis. Its pathway is alkaloid biosynthesis. Nonribosomal peptide synthetase; part of the gene cluster that mediates the biosynthesis of echinulin family alkaloid. The pathway begins with the biosynthesis of the cyclic dipeptide cyclo-L-Trp-L-Ala (cyclo-TA) by the NRPS echPS via condensation of L-alanine and L-tryptophan. The prenyltransferase echPT1 then catalyzes the first prenylation step, a reverse prenylation reaction at C2, to yield preechinulin. Preechinulin is the substrate of the cytochrome P450 monooxygenase echP450 that catalyzes the formation of the double bond between C10 and C11 to produce neoechulin A. The unique prenyltransferase echPT2 functions as a competitive enzyme with echP450 for preechinulin metabolization and uses preechinulin for effective regiospecific prenylations. Preechinulin is prenylated by echPT2 at C5 or C7. C7-prenylation leads to accumulation of tardioxopiperazine B without further modification by echPT2. In contrast, the C5-prenylated tardioxopiperazine A can be prenylated again by echPT2, predominantly at C7 to form echinulin or less frequently at C4 to give variecolorin L. EchPT2 also accepts neoechilunin A to produce varlecolorin G (prenylation at C5) or isoechinulin A (prenylation at C7). EchPT2 further converts isoechinulin A into dehydroechinulin. Moreover, a yet unidentified enzyme can also convert neoechilunin A into neoechilunin B by introducing a double bond between positions C14 and C17 and thus provides a further substrate to echPT2 for C5 and C7 prenylation. In Aspergillus ruber (strain CBS 135680), this protein is Nonribosomal peptide synthetase echPS.